A 261-amino-acid chain; its full sequence is MIRTSSHVLNVQENIMTSNCASSPYSCEATSACAEAQQVMIDNFVFFHMYNADIQIDAKLQCGVRSAAFAMIDDKHLEMYKHRIENKFFYYYDQCADIAKPDRLPDDDGACCHHFIFDAQRIIQCIKEIESAYGVRDRGNVIVFYPYLKQLRDALKLIKNSFACCFKIINSMQMYVNELISNCLLFIEKLETINKTVKVMNLFVDNLVLYECNVCKEISTDERFLKPKECCEYAICNACCVNMWKTATTHAKCPACRTSYK.

The RING-type zinc finger occupies C212–R257.

Interacts with proteins C42 and FP25. Interacts with host beta-tubulin. Interacts with Ac66 and vUb.

It localises to the host nucleus. Its subcellular location is the host cytoplasm. It is found in the virion. Its function is as follows. Putative viral E3 ligase that plays an essential regulatory role in both viral DNA replication and transcriptional transactivation. The role in transcription has been shown to include activation of gene expression from early viral promoters. Also promotes the efficient egress of nucleocapsids from the host nucleus. May act as an E3 ligase that promotes ubiquitination of nucleocapsids proteins by vUbi and subsequent viral egress for the host nucleus. This is Immediate-early protein IE-0 (IE0) from Lepidoptera (butterflies and moths).